Consider the following 66-residue polypeptide: Putative alpha-neurotoxin RjAa13 (66 aa).

Residues 1–60 form the LCN-type CS-alpha/beta domain; that stretch reads KEGYPVDWGNCKYECMSDAYCKDLCVDRKAKSGYCYKLNWSCYCEGLPDDSPIKTNGHCR. Intrachain disulfides connect Cys-11–Cys-59, Cys-15–Cys-35, Cys-21–Cys-42, and Cys-25–Cys-44.

This sequence belongs to the long (4 C-C) scorpion toxin superfamily. Sodium channel inhibitor family. Alpha subfamily. Expressed by the venom gland.

It is found in the secreted. Functionally, alpha toxins bind voltage-independently at site-3 of sodium channels (Nav) and inhibits the inactivation of the activated channels, thereby blocking neuronal transmission. The polypeptide is Putative alpha-neurotoxin RjAa13 (Rhopalurus junceus (Caribbean blue scorpion)).